A 344-amino-acid polypeptide reads, in one-letter code: Uroporphyrinogen decarboxylase (344 aa).

Substrate is bound by residues 27 to 31 (RQAGR), F46, D76, Y151, S206, and H319.

It belongs to the uroporphyrinogen decarboxylase family. In terms of assembly, homodimer.

The protein resides in the cytoplasm. The catalysed reaction is uroporphyrinogen III + 4 H(+) = coproporphyrinogen III + 4 CO2. It functions in the pathway porphyrin-containing compound metabolism; protoporphyrin-IX biosynthesis; coproporphyrinogen-III from 5-aminolevulinate: step 4/4. In terms of biological role, catalyzes the decarboxylation of four acetate groups of uroporphyrinogen-III to yield coproporphyrinogen-III. The polypeptide is Uroporphyrinogen decarboxylase (Halalkalibacterium halodurans (strain ATCC BAA-125 / DSM 18197 / FERM 7344 / JCM 9153 / C-125) (Bacillus halodurans)).